Consider the following 145-residue polypeptide: Protein SprT-like (145 aa).

The 136-residue stretch at 5-140 (DYVREVSLAD…ACGRCHGRLI (136 aa)) folds into the SprT-like domain. His-64 contributes to the Zn(2+) binding site. Glu-65 is an active-site residue. His-68 provides a ligand contact to Zn(2+).

This sequence belongs to the SprT family. Requires Zn(2+) as cofactor.

The protein localises to the cytoplasm. In Streptococcus equi subsp. equi (strain 4047), this protein is Protein SprT-like.